We begin with the raw amino-acid sequence, 239 residues long: Phosphoribosylaminoimidazole-succinocarboxamide synthase (239 aa).

The protein belongs to the SAICAR synthetase family.

It catalyses the reaction 5-amino-1-(5-phospho-D-ribosyl)imidazole-4-carboxylate + L-aspartate + ATP = (2S)-2-[5-amino-1-(5-phospho-beta-D-ribosyl)imidazole-4-carboxamido]succinate + ADP + phosphate + 2 H(+). Its pathway is purine metabolism; IMP biosynthesis via de novo pathway; 5-amino-1-(5-phospho-D-ribosyl)imidazole-4-carboxamide from 5-amino-1-(5-phospho-D-ribosyl)imidazole-4-carboxylate: step 1/2. This chain is Phosphoribosylaminoimidazole-succinocarboxamide synthase, found in Bacillus thuringiensis subsp. konkukian (strain 97-27).